We begin with the raw amino-acid sequence, 375 residues long: Histidine biosynthesis bifunctional protein HisB (375 aa).

The histidinol-phosphatase stretch occupies residues 1-168; that stretch reads MTPILFVDRD…GIAHELADAP (168 aa). Catalysis depends on aspartate 8, which acts as the Nucleophile. Residues aspartate 8, aspartate 10, and aspartate 128 each coordinate Mg(2+). Aspartate 10 serves as the catalytic Proton donor. Residues 169–375 form an imidazoleglycerol-phosphate dehydratase region; sequence RRAVVQRNTK…TALPSTKGAL (207 aa).

It in the N-terminal section; belongs to the histidinol-phosphatase family. The protein in the C-terminal section; belongs to the imidazoleglycerol-phosphate dehydratase family. It depends on Mg(2+) as a cofactor.

The protein localises to the cytoplasm. It carries out the reaction D-erythro-1-(imidazol-4-yl)glycerol 3-phosphate = 3-(imidazol-4-yl)-2-oxopropyl phosphate + H2O. The catalysed reaction is L-histidinol phosphate + H2O = L-histidinol + phosphate. It participates in amino-acid biosynthesis; L-histidine biosynthesis; L-histidine from 5-phospho-alpha-D-ribose 1-diphosphate: step 6/9. The protein operates within amino-acid biosynthesis; L-histidine biosynthesis; L-histidine from 5-phospho-alpha-D-ribose 1-diphosphate: step 8/9. The polypeptide is Histidine biosynthesis bifunctional protein HisB (Xanthomonas campestris pv. campestris (strain B100)).